The following is a 258-amino-acid chain: Imidazole glycerol phosphate synthase subunit HisF (258 aa).

Catalysis depends on residues Asp-11 and Asp-130.

It belongs to the HisA/HisF family. As to quaternary structure, heterodimer of HisH and HisF.

It is found in the cytoplasm. It catalyses the reaction 5-[(5-phospho-1-deoxy-D-ribulos-1-ylimino)methylamino]-1-(5-phospho-beta-D-ribosyl)imidazole-4-carboxamide + L-glutamine = D-erythro-1-(imidazol-4-yl)glycerol 3-phosphate + 5-amino-1-(5-phospho-beta-D-ribosyl)imidazole-4-carboxamide + L-glutamate + H(+). It functions in the pathway amino-acid biosynthesis; L-histidine biosynthesis; L-histidine from 5-phospho-alpha-D-ribose 1-diphosphate: step 5/9. In terms of biological role, IGPS catalyzes the conversion of PRFAR and glutamine to IGP, AICAR and glutamate. The HisF subunit catalyzes the cyclization activity that produces IGP and AICAR from PRFAR using the ammonia provided by the HisH subunit. The chain is Imidazole glycerol phosphate synthase subunit HisF from Haemophilus influenzae (strain PittEE).